The sequence spans 294 residues: Complement C1q tumor necrosis factor-related protein 2 (294 aa).

Positions 1–24 (MTIFKKVTTMISWVLLACALPCAA) are cleaved as a signal peptide. The interval 42 to 156 (QLVCSLPGPQ…PGPCSCGSSR (115 aa)) is disordered. A Collagen-like domain is found at 48–150 (PGPQGPPGPP…KGEPGLPGPC (103 aa)). Residues 50–59 (PQGPPGPPGA) show a composition bias toward pro residues. Positions 75-87 (DGQDGQDGDRGDS) are enriched in basic and acidic residues. Residues 105 to 129 (KGKAGAIGRAGPRGPKGVSGTPGKH) are compositionally biased toward low complexity. Residues 154 to 290 (SSRAKSAFSV…GFLIYADQGD (137 aa)) enclose the C1q domain.

As to quaternary structure, may interact with ERFE.

Its subcellular location is the secreted. Functionally, involved in the regulation of lipid metabolism in adipose tissue and liver. This Mus musculus (Mouse) protein is Complement C1q tumor necrosis factor-related protein 2 (C1qtnf2).